The sequence spans 154 residues: Small ribosomal subunit protein bS18 (154 aa).

The disordered stretch occupies residues 1-82 (MEKKTTKKAT…PFAKYNRGYP (82 aa)). Low complexity predominate over residues 8-19 (KATASKTTTTKK). The segment covering 20–32 (AAAEKTEIKETKK) has biased composition (basic and acidic residues). The span at 33-49 (TTTTKTSTAKKATTASV) shows a compositional bias: low complexity. A compositionally biased stretch (basic and acidic residues) spans 50–69 (EKTEVKETKKSSDNKKEFNP).

The protein belongs to the bacterial ribosomal protein bS18 family. As to quaternary structure, part of the 30S ribosomal subunit. Forms a tight heterodimer with protein bS6.

Its function is as follows. Binds as a heterodimer with protein bS6 to the central domain of the 16S rRNA, where it helps stabilize the platform of the 30S subunit. The sequence is that of Small ribosomal subunit protein bS18 from Malacoplasma penetrans (strain HF-2) (Mycoplasma penetrans).